The sequence spans 590 residues: Neuronal PAS domain-containing protein 1 (590 aa).

Positions 45–98 (QRKEKSRNAARSRRGKENLEFFELAKLLPLPGAISSQLDKASIVRLSVTYLRLR) constitute a bHLH domain. A PAS 1 domain is found at 135-207 (EQHLGGHILQ…LGLRTPTPGP (73 aa)). The tract at residues 198 to 229 (LGLRTPTPGPPTPPSVSSSSSSSSSLADTPEI) is disordered. Residues 212-222 (SVSSSSSSSSS) are compositionally biased toward low complexity. The PAS 2 domain occupies 293 to 359 (APLAELPLHG…IRQSHVDLLD (67 aa)). In terms of domain architecture, PAC spans 365–408 (TGYYRWLQRAGGFVWLQSVATVAGSGKSPGEHHVLWVSHVLSQA). Positions 425–494 (ACEEASSPGP…SHPATPRPEF (70 aa)) are disordered. The segment covering 433–442 (GPEPTEPEPP) has biased composition (pro residues). Positions 463-476 (IKVEPGPRETKGSE) are enriched in basic and acidic residues.

Efficient DNA binding requires dimerization with another bHLH protein. Interacts with ARNT; forms a heterodimer that binds core DNA sequence 5'-[AG]CGTG-3' within the hypoxia response element (HRE) leading to a transcriptional repressor on its target gene TH.

The protein resides in the nucleus. May control regulatory pathways relevant to schizophrenia and to psychotic illness. May play a role in late central nervous system development by modulating EPO expression in response to cellular oxygen level. Forms a heterodimer that binds core DNA sequence 5'-TACGTG-3' within the hypoxia response element (HRE) leading to transcriptional repression on its target gene TH. The protein is Neuronal PAS domain-containing protein 1 (NPAS1) of Homo sapiens (Human).